The following is a 295-amino-acid chain: Hepatic leukemia factor (295 aa).

Residues 37–52 are compositionally biased toward basic and acidic residues; it reads EDAFSKDKDKEKKLDD. 2 disordered regions span residues 37–70 and 93–167; these read EDAF…PTLW and SENG…IDPD. The bZIP domain maps to 225–288; sequence DDKYWARRRK…GKCKNILAKY (64 aa). A basic motif region spans residues 227–247; the sequence is KYWARRRKNNMAAKRSRDARR. The tract at residues 248-255 is leucine-zipper; the sequence is LKENQIAI.

It belongs to the bZIP family. PAR subfamily. As to quaternary structure, binds DNA specifically as homodimer or heterodimer with other PAR factors. In terms of tissue distribution, highly expressed in liver; lower levels in lung and kidney.

It is found in the nucleus. This chain is Hepatic leukemia factor (HLF), found in Homo sapiens (Human).